Reading from the N-terminus, the 81-residue chain is ATP synthase subunit c, chloroplastic (81 aa).

2 helical membrane passes run 3 to 23 and 53 to 73; these read PLIS…ASIG and LLLS…VALA.

Belongs to the ATPase C chain family. F-type ATPases have 2 components, F(1) - the catalytic core - and F(0) - the membrane proton channel. F(1) has five subunits: alpha(3), beta(3), gamma(1), delta(1), epsilon(1). F(0) has four main subunits: a(1), b(1), b'(1) and c(10-14). The alpha and beta chains form an alternating ring which encloses part of the gamma chain. F(1) is attached to F(0) by a central stalk formed by the gamma and epsilon chains, while a peripheral stalk is formed by the delta, b and b' chains.

The protein localises to the plastid. It localises to the chloroplast thylakoid membrane. Its function is as follows. F(1)F(0) ATP synthase produces ATP from ADP in the presence of a proton or sodium gradient. F-type ATPases consist of two structural domains, F(1) containing the extramembraneous catalytic core and F(0) containing the membrane proton channel, linked together by a central stalk and a peripheral stalk. During catalysis, ATP synthesis in the catalytic domain of F(1) is coupled via a rotary mechanism of the central stalk subunits to proton translocation. Key component of the F(0) channel; it plays a direct role in translocation across the membrane. A homomeric c-ring of between 10-14 subunits forms the central stalk rotor element with the F(1) delta and epsilon subunits. The polypeptide is ATP synthase subunit c, chloroplastic (Angiopteris evecta (Mule's foot fern)).